Reading from the N-terminus, the 188-residue chain is ATP synthase subunit b, chloroplastic (188 aa).

A helical membrane pass occupies residues 35–57 (LINLAVVIGVLVYFGKGVLTTLL).

It belongs to the ATPase B chain family. In terms of assembly, F-type ATPases have 2 components, F(1) - the catalytic core - and F(0) - the membrane proton channel. F(1) has five subunits: alpha(3), beta(3), gamma(1), delta(1), epsilon(1). F(0) has four main subunits: a(1), b(1), b'(1) and c(10-14). The alpha and beta chains form an alternating ring which encloses part of the gamma chain. F(1) is attached to F(0) by a central stalk formed by the gamma and epsilon chains, while a peripheral stalk is formed by the delta, b and b' chains.

It localises to the plastid. It is found in the chloroplast thylakoid membrane. In terms of biological role, f(1)F(0) ATP synthase produces ATP from ADP in the presence of a proton or sodium gradient. F-type ATPases consist of two structural domains, F(1) containing the extramembraneous catalytic core and F(0) containing the membrane proton channel, linked together by a central stalk and a peripheral stalk. During catalysis, ATP synthesis in the catalytic domain of F(1) is coupled via a rotary mechanism of the central stalk subunits to proton translocation. Component of the F(0) channel, it forms part of the peripheral stalk, linking F(1) to F(0). This Zygnema circumcarinatum (Green alga) protein is ATP synthase subunit b, chloroplastic.